An 87-amino-acid chain; its full sequence is Small ribosomal subunit protein uS17 (87 aa).

It belongs to the universal ribosomal protein uS17 family. In terms of assembly, part of the 30S ribosomal subunit.

In terms of biological role, one of the primary rRNA binding proteins, it binds specifically to the 5'-end of 16S ribosomal RNA. The chain is Small ribosomal subunit protein uS17 from Endomicrobium trichonymphae.